The following is a 199-amino-acid chain: Imidazoleglycerol-phosphate dehydratase (199 aa).

The protein belongs to the imidazoleglycerol-phosphate dehydratase family.

It localises to the cytoplasm. It catalyses the reaction D-erythro-1-(imidazol-4-yl)glycerol 3-phosphate = 3-(imidazol-4-yl)-2-oxopropyl phosphate + H2O. It functions in the pathway amino-acid biosynthesis; L-histidine biosynthesis; L-histidine from 5-phospho-alpha-D-ribose 1-diphosphate: step 6/9. The chain is Imidazoleglycerol-phosphate dehydratase from Bifidobacterium longum (strain NCC 2705).